We begin with the raw amino-acid sequence, 125 residues long: Plastocyanin (125 aa).

Residues 1–34 form the signal peptide; that stretch reads MKVLASFARRLSLFAVAAVLCVGSFFLSAAPASA. In terms of domain architecture, Plastocyanin-like spans 35 to 125; that stretch reads QTVAIKMGAD…AGMVGKIVVQ (91 aa). Positions 73, 110, 113, and 118 each coordinate Cu cation.

Belongs to the plastocyanin family. It depends on Cu(2+) as a cofactor.

Its subcellular location is the cellular thylakoid membrane. Functionally, participates in electron transfer between P700 and the cytochrome b6-f complex in photosystem I. This Synechococcus elongatus (strain ATCC 33912 / PCC 7942 / FACHB-805) (Anacystis nidulans R2) protein is Plastocyanin (petE).